The sequence spans 160 residues: Dysbindin domain-containing protein 1 (160 aa).

A phosphoserine mark is found at S3, S97, and S121. A disordered region spans residues A95–D160. The span at T127–R143 shows a compositional bias: basic and acidic residues.

Belongs to the dysbindin family.

The polypeptide is Dysbindin domain-containing protein 1 (Dbndd1) (Mus musculus (Mouse)).